Here is a 247-residue protein sequence, read N- to C-terminus: Carboxy-S-adenosyl-L-methionine synthase (247 aa).

S-adenosyl-L-methionine is bound by residues Tyr-39, 89 to 90 (DN), 117 to 118 (DI), Asn-132, and Arg-199.

The protein belongs to the class I-like SAM-binding methyltransferase superfamily. Cx-SAM synthase family. Homodimer.

It carries out the reaction prephenate + S-adenosyl-L-methionine = carboxy-S-adenosyl-L-methionine + 3-phenylpyruvate + H2O. Functionally, catalyzes the conversion of S-adenosyl-L-methionine (SAM) to carboxy-S-adenosyl-L-methionine (Cx-SAM). The chain is Carboxy-S-adenosyl-L-methionine synthase from Sodalis glossinidius (strain morsitans).